Consider the following 769-residue polypeptide: Probable protease Ga0334635_1659 (769 aa).

The disordered stretch occupies residues 118-167 (VARGSSDNNGAPPLSFTLSHGDPKSDPEPSSPSRLVNTGLSEAERPESPL).

In terms of biological role, probably a dedicated protease for substrate gasdermin bGSDM; cleaves the bGSDM precursor, releasing the pore-forming moiety, which integrates into the membrane and triggers cell death. Involved in defense against bacteriophages. Expression of gasdermin bGSDM and this neighboring protease is toxic in E.coli. The chain is Probable protease Ga0334635_1659 from Vitiosangium sp. (strain GDMCC 1.1324).